The following is a 321-amino-acid chain: Cytochrome f (321 aa).

The N-terminal stretch at 1–38 (MKKNFYTISKTMSRSLKLILFSVFIGFSIFLIPQPTWA) is a signal peptide. Residues Tyr39, Cys59, Cys62, and His63 each contribute to the heme site. Residues 288–308 (VIGMIIFFIGVGLSQIMLVLK) form a helical membrane-spanning segment.

The protein belongs to the cytochrome f family. As to quaternary structure, the 4 large subunits of the cytochrome b6-f complex are cytochrome b6, subunit IV (17 kDa polypeptide, PetD), cytochrome f and the Rieske protein, while the 4 small subunits are PetG, PetL, PetM and PetN. The complex functions as a dimer. Heme is required as a cofactor.

The protein localises to the cellular thylakoid membrane. In terms of biological role, component of the cytochrome b6-f complex, which mediates electron transfer between photosystem II (PSII) and photosystem I (PSI), cyclic electron flow around PSI, and state transitions. The protein is Cytochrome f of Prochlorococcus marinus (strain NATL1A).